Consider the following 215-residue polypeptide: LexA repressor (215 aa).

Positions 28–48 (RAEIAAELGFSSPNAAEEHLR) form a DNA-binding region, H-T-H motif. Catalysis depends on for autocatalytic cleavage activity residues serine 133 and lysine 170.

The protein belongs to the peptidase S24 family. As to quaternary structure, homodimer.

The enzyme catalyses Hydrolysis of Ala-|-Gly bond in repressor LexA.. In terms of biological role, represses a number of genes involved in the response to DNA damage (SOS response), including recA and lexA. In the presence of single-stranded DNA, RecA interacts with LexA causing an autocatalytic cleavage which disrupts the DNA-binding part of LexA, leading to derepression of the SOS regulon and eventually DNA repair. In Burkholderia vietnamiensis (strain G4 / LMG 22486) (Burkholderia cepacia (strain R1808)), this protein is LexA repressor.